Consider the following 92-residue polypeptide: Large ribosomal subunit protein bL27 (92 aa).

The tract at residues 1–20 (MAHKKAGGSTRNGRDSNPKY) is disordered.

This sequence belongs to the bacterial ribosomal protein bL27 family.

This is Large ribosomal subunit protein bL27 from Legionella pneumophila (strain Paris).